The chain runs to 105 residues: Early E3A 12.1 kDa protein (105 aa).

The protein belongs to the adenoviridae E3A-2 family.

Functionally, not yet known. The chain is Early E3A 12.1 kDa protein from Human adenovirus A serotype 12 (HAdV-12).